Here is a 578-residue protein sequence, read N- to C-terminus: Proline--tRNA ligase (578 aa).

This sequence belongs to the class-II aminoacyl-tRNA synthetase family. ProS type 1 subfamily. Homodimer.

The protein resides in the cytoplasm. The enzyme catalyses tRNA(Pro) + L-proline + ATP = L-prolyl-tRNA(Pro) + AMP + diphosphate. Its function is as follows. Catalyzes the attachment of proline to tRNA(Pro) in a two-step reaction: proline is first activated by ATP to form Pro-AMP and then transferred to the acceptor end of tRNA(Pro). As ProRS can inadvertently accommodate and process non-cognate amino acids such as alanine and cysteine, to avoid such errors it has two additional distinct editing activities against alanine. One activity is designated as 'pretransfer' editing and involves the tRNA(Pro)-independent hydrolysis of activated Ala-AMP. The other activity is designated 'posttransfer' editing and involves deacylation of mischarged Ala-tRNA(Pro). The misacylated Cys-tRNA(Pro) is not edited by ProRS. This is Proline--tRNA ligase from Burkholderia cenocepacia (strain HI2424).